We begin with the raw amino-acid sequence, 592 residues long: NADH-ubiquinone oxidoreductase chain 5 (592 aa).

Transmembrane regions (helical) follow at residues 36–56 (LSMV…IYAI), 68–88 (FYII…SDNY), 89–109 (IMMF…ISFW), 132–152 (LFVI…FETM), 169–189 (MMLL…GWLL), 196–216 (TPVS…FVLV), 229–249 (LLVM…MAVV), 256–276 (VMAL…GSSA), 279–299 (LAMY…MSAG), 322–342 (LPFS…MPGL), 364–386 (YIMY…RVTY), 406–426 (STHM…LGYA), 451–471 (LPAM…LTTV), and 534–554 (ALIN…IVFF).

The protein belongs to the complex I subunit 5 family.

It localises to the mitochondrion inner membrane. It catalyses the reaction a ubiquinone + NADH + 5 H(+)(in) = a ubiquinol + NAD(+) + 4 H(+)(out). Its function is as follows. Core subunit of the mitochondrial membrane respiratory chain NADH dehydrogenase (Complex I) that is believed to belong to the minimal assembly required for catalysis. Complex I functions in the transfer of electrons from NADH to the respiratory chain. The immediate electron acceptor for the enzyme is believed to be ubiquinone. The sequence is that of NADH-ubiquinone oxidoreductase chain 5 (ND5) from Debaryomyces hansenii (strain ATCC 36239 / CBS 767 / BCRC 21394 / JCM 1990 / NBRC 0083 / IGC 2968) (Yeast).